A 630-amino-acid chain; its full sequence is Eukaryotic translation initiation factor 2-alpha kinase 1 (630 aa).

Residues 1-40 form a disordered region; that stretch reads MQGGNSGVRKREEEGDGAGAVAAPPAIDFPAEGPDPEYDE. The short motif at 85–104 is the SIFI-degron element; it reads LRSRQVFKLLCQTFIKMGLL. Positions 167-583 constitute a Protein kinase domain; sequence FEELAILGKG…AIQLLQSELF (417 aa). ATP contacts are provided by residues 173–181 and Lys-196; that span reads LGKGGYGRV. Residues 259-301 form a disordered region; sequence DQEEDREQCGVKNDESSSSSIIFAEPTPEKEKRFGESDTENQN. Position 285 is a phosphothreonine (Thr-285). Residues 285 to 294 are compositionally biased toward basic and acidic residues; the sequence is TPEKEKRFGE. The stretch at 410–415 is one HRM 1 repeat; it reads ACPYVM. Asp-442 serves as the catalytic Proton acceptor. Phosphothreonine; by autocatalysis occurs at positions 486 and 488. Thr-493 carries the phosphothreonine modification. One copy of the HRM 2 repeat lies at 552–557; it reads RCPVQA.

The protein belongs to the protein kinase superfamily. Ser/Thr protein kinase family. GCN2 subfamily. As to quaternary structure, synthesized in an inactive form that binds to the N-terminal domain of CDC37. Has to be associated with a multiprotein complex containing Hsp90, CDC37 and PPP5C for maturation and activation by autophosphorylation. The phosphatase PPP5C modulates this activation. Homodimer; homodimerizes in presence of heme, forming a disulfide-linked inactive homodimer. Interacts with DELE1; binds both to full-length DELE1 and processed form of DELE1 (S-DELE1) in response to stress, leading to activate its protein kinase activity and trigger the integrated stress response (ISR). Activated by autophosphorylation; phosphorylated predominantly on serine and threonine residues, but also on tyrosine residues. Autophosphorylation at Thr-488 is required for kinase activation. The active autophosphorylated form apparently is largely refractory to cellular heme fluctuations. Post-translationally, ubiquitinated and degraded by the SIFI complex once the mitochondrial stress has been resolved, thereby providing stress response silencing. Within the SIFI complex, UBR4 initiates ubiquitin chain that are further elongated or branched by KCMF1.

It carries out the reaction L-seryl-[protein] + ATP = O-phospho-L-seryl-[protein] + ADP + H(+). It catalyses the reaction L-threonyl-[protein] + ATP = O-phospho-L-threonyl-[protein] + ADP + H(+). Its activity is regulated as follows. In normal conditions, the protein kinase activity is inhibited; inhibition is relieved by various stress conditions. Inhibited by heme: in presence of heme, forms a disulfide-linked inactive homodimer. Heme depletion relieves inhibition and stimulates kinase activity by autophosphorylation. Inhibited by the heme metabolites biliverdin and bilirubin. Induced by oxidative stress generated by arsenite treatment. Binding of nitric oxide (NO) to the heme iron in the N-terminal heme-binding domain activates the kinase activity, while binding of carbon monoxide (CO) suppresses kinase activity. Protein kinase activity is also activated upon binding to DELE1 in response to various stress, triggering the integrated stress response (ISR): activated by full-length DELE1 in response to iron deficiency, while it is activated by the processed form of DELE1 (S-DELE1) in response to mitochondrial stress. Metabolic-stress sensing protein kinase that phosphorylates the alpha subunit of eukaryotic translation initiation factor 2 (EIF2S1/eIF-2-alpha) in response to various stress conditions. Key activator of the integrated stress response (ISR) required for adaptation to various stress, such as heme deficiency, oxidative stress, osmotic shock, mitochondrial dysfunction and heat shock. EIF2S1/eIF-2-alpha phosphorylation in response to stress converts EIF2S1/eIF-2-alpha in a global protein synthesis inhibitor, leading to a global attenuation of cap-dependent translation, while concomitantly initiating the preferential translation of ISR-specific mRNAs, such as the transcriptional activator ATF4, and hence allowing ATF4-mediated reprogramming. Acts as a key sensor of heme-deficiency: in normal conditions, binds hemin via a cysteine thiolate and histidine nitrogenous coordination, leading to inhibit the protein kinase activity. This binding occurs with moderate affinity, allowing it to sense the heme concentration within the cell: heme depletion relieves inhibition and stimulates kinase activity, activating the ISR. Thanks to this unique heme-sensing capacity, plays a crucial role to shut off protein synthesis during acute heme-deficient conditions. In red blood cells (RBCs), controls hemoglobin synthesis ensuring a coordinated regulation of the synthesis of its heme and globin moieties. It thereby plays an essential protective role for RBC survival in anemias of iron deficiency. Iron deficiency also triggers activation by full-length DELE1. Also activates the ISR in response to mitochondrial dysfunction: HRI/EIF2AK1 protein kinase activity is activated upon binding to the processed form of DELE1 (S-DELE1), thereby promoting the ATF4-mediated reprogramming. Also acts as an activator of mitophagy in response to mitochondrial damage: catalyzes phosphorylation of eIF-2-alpha (EIF2S1) following activation by S-DELE1, thereby promoting mitochondrial localization of EIF2S1, triggering PRKN-independent mitophagy. This is Eukaryotic translation initiation factor 2-alpha kinase 1 from Homo sapiens (Human).